We begin with the raw amino-acid sequence, 338 residues long: Glycerol-3-phosphate dehydrogenase [NAD(P)+] (338 aa).

The NADPH site is built by Ser-13, Trp-14, and Lys-108. Residues Lys-108, Gly-139, and Ser-141 each contribute to the sn-glycerol 3-phosphate site. An NADPH-binding site is contributed by Ala-143. The sn-glycerol 3-phosphate site is built by Lys-194, Asp-247, Ser-257, Arg-258, and Asn-259. The active-site Proton acceptor is Lys-194. Arg-258 is a binding site for NADPH. NADPH is bound by residues Val-282 and Glu-284.

It belongs to the NAD-dependent glycerol-3-phosphate dehydrogenase family.

The protein localises to the cytoplasm. It catalyses the reaction sn-glycerol 3-phosphate + NAD(+) = dihydroxyacetone phosphate + NADH + H(+). The enzyme catalyses sn-glycerol 3-phosphate + NADP(+) = dihydroxyacetone phosphate + NADPH + H(+). The protein operates within membrane lipid metabolism; glycerophospholipid metabolism. Functionally, catalyzes the reduction of the glycolytic intermediate dihydroxyacetone phosphate (DHAP) to sn-glycerol 3-phosphate (G3P), the key precursor for phospholipid synthesis. This chain is Glycerol-3-phosphate dehydrogenase [NAD(P)+], found in Streptococcus agalactiae serotype V (strain ATCC BAA-611 / 2603 V/R).